The sequence spans 488 residues: Alpha-ketoglutaric semialdehyde dehydrogenase (488 aa).

Residues Lys180 and Gly233–Gly238 contribute to the NAD(+) site. The active-site Proton acceptor is the Glu255. Cys289 serves as the catalytic Nucleophile. NAD(+) contacts are provided by Gln336 and Glu390.

Belongs to the aldehyde dehydrogenase family. Homotetramer.

The catalysed reaction is 2,5-dioxopentanoate + NADP(+) + H2O = 2-oxoglutarate + NADPH + 2 H(+). The enzyme catalyses 2,5-dioxopentanoate + NAD(+) + H2O = 2-oxoglutarate + NADH + 2 H(+). Its function is as follows. Catalyzes the NAD(P)(+)-dependent oxidation of alpha-ketoglutaric semialdehyde (alphaKGSA) to alpha-ketoglutarate. Prefers NADP(+) to NAD(+) as a cosubstrate. In vitro, can also use various aldehydes. The protein is Alpha-ketoglutaric semialdehyde dehydrogenase of Bacillus subtilis (strain 168).